Here is a 282-residue protein sequence, read N- to C-terminus: Acetyl-coenzyme A carboxylase carboxyl transferase subunit beta (282 aa).

Positions 23–282 (IWTKCGQCDA…MLSKLHHQQA (260 aa)) constitute a CoA carboxyltransferase N-terminal domain. Residues cysteine 27, cysteine 30, cysteine 46, and cysteine 49 each coordinate Zn(2+). A C4-type zinc finger spans residues 27-49 (CGQCDAVLYKTELEKQLGVCPKC).

The protein belongs to the AccD/PCCB family. In terms of assembly, acetyl-CoA carboxylase is a heterohexamer composed of biotin carboxyl carrier protein (AccB), biotin carboxylase (AccC) and two subunits each of ACCase subunit alpha (AccA) and ACCase subunit beta (AccD). The cofactor is Zn(2+).

It is found in the cytoplasm. It catalyses the reaction N(6)-carboxybiotinyl-L-lysyl-[protein] + acetyl-CoA = N(6)-biotinyl-L-lysyl-[protein] + malonyl-CoA. The protein operates within lipid metabolism; malonyl-CoA biosynthesis; malonyl-CoA from acetyl-CoA: step 1/1. Component of the acetyl coenzyme A carboxylase (ACC) complex. Biotin carboxylase (BC) catalyzes the carboxylation of biotin on its carrier protein (BCCP) and then the CO(2) group is transferred by the transcarboxylase to acetyl-CoA to form malonyl-CoA. The sequence is that of Acetyl-coenzyme A carboxylase carboxyl transferase subunit beta from Pseudoalteromonas atlantica (strain T6c / ATCC BAA-1087).